Consider the following 32-residue polypeptide: Photosystem II reaction center protein T (32 aa).

Residues 3 to 23 (TLVYTFLLIGTLAVLFAAVFF) form a helical membrane-spanning segment.

It belongs to the PsbT family. In terms of assembly, PSII is composed of 1 copy each of membrane proteins PsbA, PsbB, PsbC, PsbD, PsbE, PsbF, PsbH, PsbI, PsbJ, PsbK, PsbL, PsbM, PsbT, PsbX, PsbY, PsbZ, Psb30/Ycf12, at least 3 peripheral proteins of the oxygen-evolving complex and a large number of cofactors. It forms dimeric complexes.

It localises to the plastid. It is found in the chloroplast thylakoid membrane. Its function is as follows. Found at the monomer-monomer interface of the photosystem II (PS II) dimer, plays a role in assembly and dimerization of PSII. PSII is a light-driven water plastoquinone oxidoreductase, using light energy to abstract electrons from H(2)O, generating a proton gradient subsequently used for ATP formation. The polypeptide is Photosystem II reaction center protein T (Guillardia theta (Cryptophyte)).